The sequence spans 100 residues: Small ribosomal subunit protein uS14 (100 aa).

Belongs to the universal ribosomal protein uS14 family. In terms of assembly, part of the 30S ribosomal subunit. Contacts proteins S3 and S10.

Binds 16S rRNA, required for the assembly of 30S particles and may also be responsible for determining the conformation of the 16S rRNA at the A site. The chain is Small ribosomal subunit protein uS14 from Acaryochloris marina (strain MBIC 11017).